The following is a 337-amino-acid chain: Glyceraldehyde-3-phosphate dehydrogenase (337 aa).

NAD(+)-binding positions include 12–13, Asp-34, and Arg-79; that span reads RI. D-glyceraldehyde 3-phosphate-binding positions include 150 to 152, Thr-181, 210 to 211, and Arg-233; these read SCT and TG. Catalysis depends on Cys-151, which acts as the Nucleophile. Asn-315 is a binding site for NAD(+).

The protein belongs to the glyceraldehyde-3-phosphate dehydrogenase family. In terms of assembly, homotetramer.

It is found in the cytoplasm. The catalysed reaction is D-glyceraldehyde 3-phosphate + phosphate + NAD(+) = (2R)-3-phospho-glyceroyl phosphate + NADH + H(+). It participates in carbohydrate degradation; glycolysis; pyruvate from D-glyceraldehyde 3-phosphate: step 1/5. The protein is Glyceraldehyde-3-phosphate dehydrogenase (GPD) of Coccidioides immitis (strain RS) (Valley fever fungus).